A 241-amino-acid chain; its full sequence is Glucosamine-6-phosphate deaminase (241 aa).

Asp67 (proton acceptor; for enolization step) is an active-site residue. The active-site For ring-opening step is Asn136. His138 acts as the Proton acceptor; for ring-opening step in catalysis. The active-site For ring-opening step is Glu143.

Belongs to the glucosamine/galactosamine-6-phosphate isomerase family. NagB subfamily.

It carries out the reaction alpha-D-glucosamine 6-phosphate + H2O = beta-D-fructose 6-phosphate + NH4(+). Its pathway is amino-sugar metabolism; N-acetylneuraminate degradation; D-fructose 6-phosphate from N-acetylneuraminate: step 5/5. Catalyzes the reversible isomerization-deamination of glucosamine 6-phosphate (GlcN6P) to form fructose 6-phosphate (Fru6P) and ammonium ion. The chain is Glucosamine-6-phosphate deaminase from Halothermothrix orenii (strain H 168 / OCM 544 / DSM 9562).